Here is a 201-residue protein sequence, read N- to C-terminus: MESQFRPGFDVSQGAGGRASKFGDVVAPTSSTQLPGIILRIVAIVLTFISAVVMGAARQTTTVTGIDAETALLTSITVTVKSTYSAAYVYFVVANVLVFFYSVVSLVLSMVNKARLTSMSLPFSIADLLMVVLLFSSNGAAAAISVVAEKGQQNLAGWDKICNLFGGLCARVNAAIVLSMLASVAYVILVVFGMANLRRSQ.

The Cytoplasmic portion of the chain corresponds to 1-36; sequence MESQFRPGFDVSQGAGGRASKFGDVVAPTSSTQLPG. Residues 37–57 form a helical membrane-spanning segment; that stretch reads IILRIVAIVLTFISAVVMGAA. Over 58-87 the chain is Extracellular; sequence RQTTTVTGIDAETALLTSITVTVKSTYSAA. Residues 88–108 traverse the membrane as a helical segment; that stretch reads YVYFVVANVLVFFYSVVSLVL. At 109–127 the chain is on the cytoplasmic side; it reads SMVNKARLTSMSLPFSIAD. A helical membrane pass occupies residues 128 to 148; sequence LLMVVLLFSSNGAAAAISVVA. The Extracellular portion of the chain corresponds to 149–173; it reads EKGQQNLAGWDKICNLFGGLCARVN. The chain crosses the membrane as a helical span at residues 174-194; it reads AAIVLSMLASVAYVILVVFGM. The Cytoplasmic portion of the chain corresponds to 195–201; sequence ANLRRSQ.

It belongs to the Casparian strip membrane proteins (CASP) family. As to quaternary structure, homodimer and heterodimers.

It is found in the cell membrane. The sequence is that of CASP-like protein 1E1 from Musa acuminata (Banana).